Consider the following 200-residue polypeptide: Recombination protein RecR (200 aa).

A C4-type zinc finger spans residues 57–72 (CERCRNYAQSTLCPVC). Positions 80–175 (SLVCIVATPG…GVSRIAQGVP (96 aa)) constitute a Toprim domain.

It belongs to the RecR family.

Its function is as follows. May play a role in DNA repair. It seems to be involved in an RecBC-independent recombinational process of DNA repair. It may act with RecF and RecO. The chain is Recombination protein RecR from Alcanivorax borkumensis (strain ATCC 700651 / DSM 11573 / NCIMB 13689 / SK2).